The primary structure comprises 234 residues: Ubiquinone biosynthesis O-methyltransferase (234 aa).

4 residues coordinate S-adenosyl-L-methionine: Arg40, Gly59, Asp80, and Met123.

It belongs to the methyltransferase superfamily. UbiG/COQ3 family.

It catalyses the reaction a 3-demethylubiquinol + S-adenosyl-L-methionine = a ubiquinol + S-adenosyl-L-homocysteine + H(+). The catalysed reaction is a 3-(all-trans-polyprenyl)benzene-1,2-diol + S-adenosyl-L-methionine = a 2-methoxy-6-(all-trans-polyprenyl)phenol + S-adenosyl-L-homocysteine + H(+). It functions in the pathway cofactor biosynthesis; ubiquinone biosynthesis. O-methyltransferase that catalyzes the 2 O-methylation steps in the ubiquinone biosynthetic pathway. In Coxiella burnetii (strain CbuK_Q154) (Coxiella burnetii (strain Q154)), this protein is Ubiquinone biosynthesis O-methyltransferase.